Here is a 357-residue protein sequence, read N- to C-terminus: Quinolinate synthase (357 aa).

2 residues coordinate iminosuccinate: His50 and Ser71. Position 116 (Cys116) interacts with [4Fe-4S] cluster. Iminosuccinate-binding positions include Tyr142–Asn144 and Ser159. Cys203 contributes to the [4Fe-4S] cluster binding site. Iminosuccinate is bound by residues His229–Glu231 and Thr246. Cys300 contacts [4Fe-4S] cluster.

Belongs to the quinolinate synthase family. Type 1 subfamily. Requires [4Fe-4S] cluster as cofactor.

It localises to the cytoplasm. It carries out the reaction iminosuccinate + dihydroxyacetone phosphate = quinolinate + phosphate + 2 H2O + H(+). Its pathway is cofactor biosynthesis; NAD(+) biosynthesis; quinolinate from iminoaspartate: step 1/1. Its function is as follows. Catalyzes the condensation of iminoaspartate with dihydroxyacetone phosphate to form quinolinate. The sequence is that of Quinolinate synthase from Shewanella sp. (strain MR-4).